The chain runs to 179 residues: Large ribosomal subunit protein bL17 (179 aa).

Positions 123–161 are enriched in basic and acidic residues; that stretch reads KEKDTKKKDDSKKSDDKKTSKKEAGFKSSKGESEHKKNT. Residues 123–179 are disordered; that stretch reads KEKDTKKKDDSKKSDDKKTSKKEAGFKSSKGESEHKKNTDQVVDSSSNRRYNRVKGS. Over residues 162–171 the composition is skewed to polar residues; sequence DQVVDSSSNR.

The protein belongs to the bacterial ribosomal protein bL17 family. Part of the 50S ribosomal subunit. Contacts protein L32.

This Treponema denticola (strain ATCC 35405 / DSM 14222 / CIP 103919 / JCM 8153 / KCTC 15104) protein is Large ribosomal subunit protein bL17.